A 1372-amino-acid polypeptide reads, in one-letter code: MSVVNFYGQLSNTQQFDQIRINIASPDQVRSWSFGEVTKPETINYRTFKPEKDGLFCARIFGPVKDYECLCGKYKRMKNRGITCEKCGVEVTVSRVRRERMGHIELAAPVAHIWFLKSLPSRISTLLDMTMRDVEKILYFENYVVVDPGLSILQKGELLTEEELQKAKDKYGEDAFTASIGAEVIQQMLKEIDFLKLKQELYEELQTTSSEVKKKKLVKRLKLVEDFLESENKPEWMIMDVLPVIPPEIRPLVMLDGGRFATSDLNELYRRVINRNNRLKKLIESKAPDIIVRNEKRMLQEAVDALFDNGRRGRAAKNANKRPFKSLSDMLKGKQGRFRQNLLGKRVDYSGRSVIVVGSELKLHQCGLPKKMALELFKPFIYSKLELYGIATTIKAAKRMVEAEKPEVWDVLEEVIREHPVLLNRAPTLHRLGIQAFEPLLIEGKAIQLYPLVCAAFNADFDGDQMAVHIPLSIEAQLEARVFMMSTNNILSPANGRPIIVPDKDIVLGLYYLTLAFDNEVGEGMMFSDLAEMEHALYNKFITIHTKIKYRRNQLNAEGKMVPVIIDTTYGRLMVGELLPSNPNIEFKFINKQLTKKDISLVIDLVYRHCGQKATVIFADQLMKLGFKYACSSGISFGMDDMVVPESKSTHINETQLEIKEFEQQYSNGLITYGEKYNKVVDAWSRCTDRVANDMMKEIATPPVSDDPNHQKINAIYMMAISGARGSFQQIKQLGGMRGLMTKSNGQIIQTPIISNFKEGLTEFECFNSANGMRKGQIDTALKTASSGYLTRKLVDVAQDCIITEKDCGTDKGIEVKSVIEGGEVIVPLAEKILGRTAAIDIFHPVTNDLILNKGELINEAKLEQIESAGLDRIMIKSVLTCESTTGICSICYGRDLATGTLVSEGEAIGVIAAQSIGEPGTQLTMRTFHIGGAATKGAEVSSVEASYDAKVKIISRNVVINSEERKIVMSRNCELLLLDNNGNEKARHKIPYGARLLVDDGDMVIKTQKLAEWDPYTIPIITEKSGKVLFKDMVEGISIRDVTDEATGIPSKVIIESKQYSRGAELRPRIQLLDAKGEVIALSNGLEARYYLPVGAVLSVEDGVQISVGDIIARIPKESTTTKDITGGLPRVAELVEARRPKDHAVIAEIDGRVEFGKDYKSKRRIIIHPIDETMSIEYMVPKGKHVVVNEGDFVKKGDLLIDGNPVLQDILKVMGVEVLANYIVKEVQAVYRLQGVKIDDKHIEVIIRQMLQKVEITDSGGTTLLAGEKIDRHEFEEINEKAIKNGLKPAEAQLILQGITKASLQTRSFISAASFQETTRVLTEAAIAGKIDKLRGLKENVIVGRLVPAGTGYFMDKMRKAAVKLDEENV.

Zn(2+) is bound by residues cysteine 69, cysteine 71, cysteine 84, and cysteine 87. Mg(2+)-binding residues include aspartate 460, aspartate 462, and aspartate 464. 4 residues coordinate Zn(2+): cysteine 808, cysteine 882, cysteine 889, and cysteine 892.

Belongs to the RNA polymerase beta' chain family. As to quaternary structure, the RNAP catalytic core consists of 2 alpha, 1 beta, 1 beta' and 1 omega subunit. When a sigma factor is associated with the core the holoenzyme is formed, which can initiate transcription. Mg(2+) is required as a cofactor. The cofactor is Zn(2+).

It catalyses the reaction RNA(n) + a ribonucleoside 5'-triphosphate = RNA(n+1) + diphosphate. DNA-dependent RNA polymerase catalyzes the transcription of DNA into RNA using the four ribonucleoside triphosphates as substrates. In Rickettsia felis (strain ATCC VR-1525 / URRWXCal2) (Rickettsia azadi), this protein is DNA-directed RNA polymerase subunit beta'.